We begin with the raw amino-acid sequence, 370 residues long: Glutamate 5-kinase (370 aa).

Lys-17 is a binding site for ATP. Positions 56, 143, and 155 each coordinate substrate. Residue 175-176 (SD) participates in ATP binding. The PUA domain occupies 280 to 357 (RGTIRVDAGA…AEIVAILGYS (78 aa)).

Belongs to the glutamate 5-kinase family.

The protein localises to the cytoplasm. The catalysed reaction is L-glutamate + ATP = L-glutamyl 5-phosphate + ADP. It functions in the pathway amino-acid biosynthesis; L-proline biosynthesis; L-glutamate 5-semialdehyde from L-glutamate: step 1/2. Catalyzes the transfer of a phosphate group to glutamate to form L-glutamate 5-phosphate. This chain is Glutamate 5-kinase, found in Cereibacter sphaeroides (strain ATCC 17023 / DSM 158 / JCM 6121 / CCUG 31486 / LMG 2827 / NBRC 12203 / NCIMB 8253 / ATH 2.4.1.) (Rhodobacter sphaeroides).